The chain runs to 330 residues: Fructose-1,6-bisphosphatase class 1 (330 aa).

Mg(2+) is bound by residues E84, D103, L105, and D106. Residues 106 to 109, N196, and K262 each bind substrate; that span reads DGSS. Position 268 (E268) interacts with Mg(2+).

It belongs to the FBPase class 1 family. Homotetramer. Mg(2+) is required as a cofactor.

The protein resides in the cytoplasm. The enzyme catalyses beta-D-fructose 1,6-bisphosphate + H2O = beta-D-fructose 6-phosphate + phosphate. Its pathway is carbohydrate biosynthesis; gluconeogenesis. The polypeptide is Fructose-1,6-bisphosphatase class 1 (Shewanella sp. (strain ANA-3)).